Here is a 149-residue protein sequence, read N- to C-terminus: Transcriptional repressor NrdR (149 aa).

A zinc finger lies at 3–34; the sequence is CPFCSTEETKVIDSRLVSEGYQVRRRRECGNC. Positions 49–139 constitute an ATP-cone domain; that stretch reads PKVIKNDGTR…VYLSFDDINQ (91 aa).

It belongs to the NrdR family. Requires Zn(2+) as cofactor.

Functionally, negatively regulates transcription of bacterial ribonucleotide reductase nrd genes and operons by binding to NrdR-boxes. The polypeptide is Transcriptional repressor NrdR (Pasteurella multocida (strain Pm70)).